The sequence spans 258 residues: Global transcriptional regulator CodY (258 aa).

The segment at 1–156 (MSILLNKTRK…SATIVGLEIL (156 aa)) is GAF domain. The H-T-H motif DNA-binding region spans 204–223 (ASKIADKVGITRSVIVNALR).

This sequence belongs to the CodY family.

It localises to the cytoplasm. Functionally, DNA-binding global transcriptional regulator which is involved in the adaptive response to starvation and acts by directly or indirectly controlling the expression of numerous genes in response to nutrient availability. During rapid exponential growth, CodY is highly active and represses genes whose products allow adaptation to nutrient depletion. This Clostridium acetobutylicum (strain ATCC 824 / DSM 792 / JCM 1419 / IAM 19013 / LMG 5710 / NBRC 13948 / NRRL B-527 / VKM B-1787 / 2291 / W) protein is Global transcriptional regulator CodY.